A 210-amino-acid chain; its full sequence is Synaptosomal-associated protein 23 (210 aa).

Position 1 is an N-acetylmethionine (methionine 1). A phosphoserine mark is found at serine 5, serine 20, serine 23, and serine 34. Residues 14 to 76 (HQVTDESLES…REAEKTLTEL (63 aa)) form the t-SNARE coiled-coil homology 1 domain. Positions 23–76 (STRRILGLAIESQDAGIKTITMLDEQGEQLNRIEEGMDQINKDMREAEKTLTEL) form a coiled coil. S-palmitoyl cysteine attachment occurs at residues cysteine 79, cysteine 80, cysteine 83, cysteine 85, and cysteine 87. The segment at 104–135 (GDGGDNSPSNVVSKQPSRITNGQPQQTTGAAS) is disordered. The segment covering 109–133 (NSPSNVVSKQPSRITNGQPQQTTGA) has biased composition (polar residues). A phosphoserine mark is found at serine 110 and serine 160. One can recognise a t-SNARE coiled-coil homology 2 domain in the interval 145–207 (DAREDEMEEN…DIANTRAKKL (63 aa)).

The protein belongs to the SNAP-25 family. In terms of assembly, homotetramer (via coiled-coil domain), also forms heterotetramers with STX4 and VAMP3. Found in a complex with VAMP8 and STX1A. Found in a complex with VAMP8 and STX4 in pancreas. Interacts simultaneously with SNAPIN and SYN4. Interacts with STX1A. Interacts with STX12. Interacts tightly to multiple syntaxins and synaptobrevins/VAMPs. Interacts with ZDHHC13 (via ANK repeats). Interacts with ZDHHC17 (via ANK repeats). In terms of processing, (Microbial infection) Targeted and hydrolyzed by C.botulinum neurotoxin type A (BoNT/A, botA) which hydrolyzes the 202-Thr-|-Arg-203 bond; the in vitro reaction is not highly efficient. (Microbial infection) Targeted and hydrolyzed by C.botulinum neurotoxin type E (BoNT/E) which hydrolyzes the 185-Arg-|-Ile-186 bond; the in vitro reaction is more efficient than that of BoNT/A. Expressed in non-neuronal tissues.

It is found in the cell membrane. It localises to the synapse. The protein localises to the synaptosome. Essential component of the high affinity receptor for the general membrane fusion machinery and an important regulator of transport vesicle docking and fusion. This chain is Synaptosomal-associated protein 23 (Snap23), found in Mus musculus (Mouse).